A 476-amino-acid polypeptide reads, in one-letter code: 3-ketoacyl-CoA synthase 12 (476 aa).

The N-terminal stretch at 1-25 (MDLLFLFFSLLLSYLFFKIWKLIDS) is a signal peptide. The FAE domain maps to 26-313 (KQDKDCYILD…FMLKLLIKKI (288 aa)). Active-site residues include cysteine 168, histidine 247, histidine 344, histidine 348, histidine 377, and asparagine 381.

This sequence belongs to the thiolase-like superfamily. Chalcone/stilbene synthases family. As to expression, expressed in siliques, flowers and leaves.

Its subcellular location is the endoplasmic reticulum. It catalyses the reaction a very-long-chain acyl-CoA + malonyl-CoA + H(+) = a very-long-chain 3-oxoacyl-CoA + CO2 + CoA. Its pathway is lipid metabolism; fatty acid biosynthesis. In Arabidopsis thaliana (Mouse-ear cress), this protein is 3-ketoacyl-CoA synthase 12.